A 98-amino-acid polypeptide reads, in one-letter code: Bombyxin E-1 (98 aa).

An N-terminal signal peptide occupies residues 1 to 19; it reads MNRPVFLVLLLTGFLCIAA. At Q20 the chain carries Pyrrolidone carboxylic acid. Disulfide bonds link C29–C85, C41–C98, and C84–C89. The propeptide at 50–75 is c peptide like; that stretch reads SESSLASYSSRGWPWLPTPNFNKRAI.

It belongs to the insulin family. Heterodimer of a B chain and an A chain linked by two disulfide bonds.

It is found in the secreted. PTTH is a brain peptide responsible for activation of prothoracic glands to produce ecdysone in insects. The protein is Bombyxin E-1 (BBXE1) of Bombyx mori (Silk moth).